The primary structure comprises 226 residues: UPF0502 protein azo0627 (226 aa).

The protein belongs to the UPF0502 family.

The sequence is that of UPF0502 protein azo0627 from Azoarcus sp. (strain BH72).